A 359-amino-acid polypeptide reads, in one-letter code: Photosystem II protein D1 1 (359 aa).

3 helical membrane-spanning segments follow: residues 29–46 (YVGWFGVLMIPTLLAATI), 118–133 (HFLIGIYAYMGREWEL), and 142–156 (WICVAYSAPVAAASA). Residue histidine 118 coordinates chlorophyll a. Pheophytin a is bound at residue tyrosine 126. [CaMn4O5] cluster-binding residues include aspartate 170 and glutamate 189. The chain crosses the membrane as a helical span at residues 197 to 218 (FHMLGVAGVFGGSLFSAMHGSL). Histidine 198 is a chlorophyll a binding site. A quinone is bound by residues histidine 215 and 264–265 (SF). Histidine 215 is a Fe cation binding site. Histidine 272 serves as a coordination point for Fe cation. Residues 274-288 (FLAAWPVVGIWFTAL) form a helical membrane-spanning segment. Residues histidine 332, glutamate 333, aspartate 342, and alanine 344 each contribute to the [CaMn4O5] cluster site. A propeptide spanning residues 345–359 (AAESTPVALQAPAIG) is cleaved from the precursor.

The protein belongs to the reaction center PufL/M/PsbA/D family. PSII is composed of 1 copy each of membrane proteins PsbA, PsbB, PsbC, PsbD, PsbE, PsbF, PsbH, PsbI, PsbJ, PsbK, PsbL, PsbM, PsbT, PsbX, PsbY, PsbZ, Psb30/Ycf12, peripheral proteins PsbO, CyanoQ (PsbQ), PsbU, PsbV and a large number of cofactors. It forms dimeric complexes. The D1/D2 heterodimer binds P680, chlorophylls that are the primary electron donor of PSII, and subsequent electron acceptors. It shares a non-heme iron and each subunit binds pheophytin, quinone, additional chlorophylls, carotenoids and lipids. D1 provides most of the ligands for the Mn4-Ca-O5 cluster of the oxygen-evolving complex (OEC). There is also a Cl(-1) ion associated with D1 and D2, which is required for oxygen evolution. The PSII complex binds additional chlorophylls, carotenoids and specific lipids. serves as cofactor. In terms of processing, tyr-161 forms a radical intermediate that is referred to as redox-active TyrZ, YZ or Y-Z. C-terminally processed by CtpA; processing is essential to allow assembly of the oxygen-evolving complex and thus photosynthetic growth.

It is found in the cellular thylakoid membrane. The catalysed reaction is 2 a plastoquinone + 4 hnu + 2 H2O = 2 a plastoquinol + O2. Functionally, photosystem II (PSII) is a light-driven water:plastoquinone oxidoreductase that uses light energy to abstract electrons from H(2)O, generating O(2) and a proton gradient subsequently used for ATP formation. It consists of a core antenna complex that captures photons, and an electron transfer chain that converts photonic excitation into a charge separation. The D1/D2 (PsbA/PsbD) reaction center heterodimer binds P680, the primary electron donor of PSII as well as several subsequent electron acceptors. In Parasynechococcus marenigrum (strain WH8102), this protein is Photosystem II protein D1 1.